Here is a 138-residue protein sequence, read N- to C-terminus: Membrane protein P8A7 (138 aa).

Transmembrane regions (helical) follow at residues Ile12–Val30, Gly32–Leu56, Tyr71–Gly90, and Gly93–Cys118.

It localises to the membrane. This chain is Membrane protein P8A7 (pmpA), found in Dictyostelium discoideum (Social amoeba).